The sequence spans 106 residues: Small ribosomal subunit protein uS10 (106 aa).

It belongs to the universal ribosomal protein uS10 family. Part of the 30S ribosomal subunit.

Functionally, involved in the binding of tRNA to the ribosomes. The protein is Small ribosomal subunit protein uS10 of Synechococcus sp. (strain CC9902).